Reading from the N-terminus, the 77-residue chain is Small ribosomal subunit protein bS16 (77 aa).

Belongs to the bacterial ribosomal protein bS16 family.

This Wolinella succinogenes (strain ATCC 29543 / DSM 1740 / CCUG 13145 / JCM 31913 / LMG 7466 / NCTC 11488 / FDC 602W) (Vibrio succinogenes) protein is Small ribosomal subunit protein bS16.